We begin with the raw amino-acid sequence, 294 residues long: tRNA dimethylallyltransferase (294 aa).

10–17 (GPTAVGKT) contacts ATP. Residue 12-17 (TAVGKT) coordinates substrate. The segment at 35 to 38 (DSQQ) is interaction with substrate tRNA.

It belongs to the IPP transferase family. As to quaternary structure, monomer. It depends on Mg(2+) as a cofactor.

It carries out the reaction adenosine(37) in tRNA + dimethylallyl diphosphate = N(6)-dimethylallyladenosine(37) in tRNA + diphosphate. In terms of biological role, catalyzes the transfer of a dimethylallyl group onto the adenine at position 37 in tRNAs that read codons beginning with uridine, leading to the formation of N6-(dimethylallyl)adenosine (i(6)A). This chain is tRNA dimethylallyltransferase, found in Streptococcus mutans serotype c (strain ATCC 700610 / UA159).